Reading from the N-terminus, the 225-residue chain is 3-dehydroquinate dehydratase (225 aa).

3-dehydroquinate-binding positions include E30–R32 and R62. The active-site Proton donor/acceptor is the H118. The active-site Schiff-base intermediate with substrate is the K143. R186, S205, and Q209 together coordinate 3-dehydroquinate.

This sequence belongs to the type-I 3-dehydroquinase family. Homodimer.

The catalysed reaction is 3-dehydroquinate = 3-dehydroshikimate + H2O. It functions in the pathway metabolic intermediate biosynthesis; chorismate biosynthesis; chorismate from D-erythrose 4-phosphate and phosphoenolpyruvate: step 3/7. Functionally, involved in the third step of the chorismate pathway, which leads to the biosynthesis of aromatic amino acids. Catalyzes the cis-dehydration of 3-dehydroquinate (DHQ) and introduces the first double bond of the aromatic ring to yield 3-dehydroshikimate. In Streptococcus thermophilus (strain ATCC BAA-250 / LMG 18311), this protein is 3-dehydroquinate dehydratase.